The chain runs to 64 residues: Large ribosomal subunit protein uL30 (64 aa).

It belongs to the universal ribosomal protein uL30 family. As to quaternary structure, part of the 50S ribosomal subunit.

This Rhodopseudomonas palustris (strain HaA2) protein is Large ribosomal subunit protein uL30.